A 512-amino-acid chain; its full sequence is Altronate oxidoreductase (512 aa).

Position 26 to 37 (26 to 37 (VLQFGEGNFLRG)) interacts with NAD(+).

This sequence belongs to the mannitol dehydrogenase family. UxaB subfamily.

It carries out the reaction D-altronate + NAD(+) = keto-D-tagaturonate + NADH + H(+). The protein operates within carbohydrate metabolism; pentose and glucuronate interconversion. In Halalkalibacterium halodurans (strain ATCC BAA-125 / DSM 18197 / FERM 7344 / JCM 9153 / C-125) (Bacillus halodurans), this protein is Altronate oxidoreductase.